The sequence spans 1026 residues: Adenylate-forming reductase 06235 (1026 aa).

Residues Phe-37–Ile-422 are adenylation (A) domain. AMP contacts are provided by residues Val-332 to Thr-333 and His-412 to Arg-415. A thiolation and peptide carrier (T) domain region spans residues Ser-556 to Lys-638. A reductase (R) domain region spans residues Cys-682–Val-901. Residues Arg-685–Ala-688, Thr-769–Leu-771, and Tyr-840 each bind NADP(+).

Belongs to the adenylate-forming reductase family.

Adenylate-forming reductase, a natural product biosynthesis enzyme that resembles non-ribosomal peptide synthetases, yet serves to modify one substrate, rather than to condense two or more building blocks. The A-domain preferentially accepts L-serine, L-alanine and L-valine as substrates. The natural product of the enzyme is not yet known. This Coprinopsis cinerea (strain Okayama-7 / 130 / ATCC MYA-4618 / FGSC 9003) (Inky cap fungus) protein is Adenylate-forming reductase 06235.